We begin with the raw amino-acid sequence, 211 residues long: Protein-L-isoaspartate O-methyltransferase (211 aa).

Residue S62 is part of the active site.

It belongs to the methyltransferase superfamily. L-isoaspartyl/D-aspartyl protein methyltransferase family.

It localises to the cytoplasm. The catalysed reaction is [protein]-L-isoaspartate + S-adenosyl-L-methionine = [protein]-L-isoaspartate alpha-methyl ester + S-adenosyl-L-homocysteine. Functionally, catalyzes the methyl esterification of L-isoaspartyl residues in peptides and proteins that result from spontaneous decomposition of normal L-aspartyl and L-asparaginyl residues. It plays a role in the repair and/or degradation of damaged proteins. This is Protein-L-isoaspartate O-methyltransferase from Shewanella baltica (strain OS223).